A 424-amino-acid chain; its full sequence is Histidinol dehydrogenase (424 aa).

Tyrosine 127, glutamine 188, and asparagine 211 together coordinate NAD(+). Serine 234, glutamine 256, and histidine 259 together coordinate substrate. Glutamine 256 and histidine 259 together coordinate Zn(2+). Residues glutamate 322 and histidine 323 each act as proton acceptor in the active site. The substrate site is built by histidine 323, aspartate 356, glutamate 410, and histidine 415. Residue aspartate 356 participates in Zn(2+) binding. Histidine 415 contributes to the Zn(2+) binding site.

This sequence belongs to the histidinol dehydrogenase family. Zn(2+) serves as cofactor.

It carries out the reaction L-histidinol + 2 NAD(+) + H2O = L-histidine + 2 NADH + 3 H(+). It participates in amino-acid biosynthesis; L-histidine biosynthesis; L-histidine from 5-phospho-alpha-D-ribose 1-diphosphate: step 9/9. Catalyzes the sequential NAD-dependent oxidations of L-histidinol to L-histidinaldehyde and then to L-histidine. In Methanococcus maripaludis (strain DSM 14266 / JCM 13030 / NBRC 101832 / S2 / LL), this protein is Histidinol dehydrogenase.